Here is a 169-residue protein sequence, read N- to C-terminus: MLETFTNDTNEIQGRLSAWLIKHRLAHRPLGFDYQGVETLQVRSEDWLSIAVALYAYGFNYLRSQCVYDVAPGGLLASVYHLTKVQSNADQPEEVCIKIFVSRKNPKIPSVFWVWKGADFQERESYDMLGISYESHPRLKRILMPDSWIGWPLRKDYIVPNFYELQDAY.

Belongs to the complex I 30 kDa subunit family. As to quaternary structure, NDH is composed of at least 16 different subunits, 5 of which are encoded in the nucleus.

It is found in the plastid. Its subcellular location is the chloroplast thylakoid membrane. It catalyses the reaction a plastoquinone + NADH + (n+1) H(+)(in) = a plastoquinol + NAD(+) + n H(+)(out). The catalysed reaction is a plastoquinone + NADPH + (n+1) H(+)(in) = a plastoquinol + NADP(+) + n H(+)(out). Functionally, NDH shuttles electrons from NAD(P)H:plastoquinone, via FMN and iron-sulfur (Fe-S) centers, to quinones in the photosynthetic chain and possibly in a chloroplast respiratory chain. The immediate electron acceptor for the enzyme in this species is believed to be plastoquinone. Couples the redox reaction to proton translocation, and thus conserves the redox energy in a proton gradient. The protein is NAD(P)H-quinone oxidoreductase subunit J, chloroplastic of Anthoceros angustus (Hornwort).